Reading from the N-terminus, the 471-residue chain is Glutamate--tRNA ligase (471 aa).

Residues 9-19 (PSPTGYLHVGG) carry the 'HIGH' region motif. Positions 98, 100, 125, and 127 each coordinate Zn(2+). Positions 237 to 241 (KLSKR) match the 'KMSKS' region motif. K240 lines the ATP pocket.

Belongs to the class-I aminoacyl-tRNA synthetase family. Glutamate--tRNA ligase type 1 subfamily. Monomer. The cofactor is Zn(2+).

It localises to the cytoplasm. The catalysed reaction is tRNA(Glu) + L-glutamate + ATP = L-glutamyl-tRNA(Glu) + AMP + diphosphate. Catalyzes the attachment of glutamate to tRNA(Glu) in a two-step reaction: glutamate is first activated by ATP to form Glu-AMP and then transferred to the acceptor end of tRNA(Glu). This Salmonella gallinarum (strain 287/91 / NCTC 13346) protein is Glutamate--tRNA ligase.